We begin with the raw amino-acid sequence, 500 residues long: Probable cytosol aminopeptidase (500 aa).

Residues lysine 261 and aspartate 266 each contribute to the Mn(2+) site. Lysine 273 is a catalytic residue. Residues aspartate 284, aspartate 343, and glutamate 345 each coordinate Mn(2+). Arginine 347 is a catalytic residue.

Belongs to the peptidase M17 family. Requires Mn(2+) as cofactor.

It is found in the cytoplasm. The catalysed reaction is Release of an N-terminal amino acid, Xaa-|-Yaa-, in which Xaa is preferably Leu, but may be other amino acids including Pro although not Arg or Lys, and Yaa may be Pro. Amino acid amides and methyl esters are also readily hydrolyzed, but rates on arylamides are exceedingly low.. The enzyme catalyses Release of an N-terminal amino acid, preferentially leucine, but not glutamic or aspartic acids.. Its function is as follows. Presumably involved in the processing and regular turnover of intracellular proteins. Catalyzes the removal of unsubstituted N-terminal amino acids from various peptides. The protein is Probable cytosol aminopeptidase (pepA) of Bacillus subtilis (strain 168).